We begin with the raw amino-acid sequence, 144 residues long: Large ribosomal subunit protein uL15 (144 aa).

A disordered region spans residues 20–49 (GRGIGSGLGKTGGRGHKGQKSRSGGFHKVG). The segment covering 21 to 31 (RGIGSGLGKTG) has biased composition (gly residues).

The protein belongs to the universal ribosomal protein uL15 family. Part of the 50S ribosomal subunit.

Its function is as follows. Binds to the 23S rRNA. This chain is Large ribosomal subunit protein uL15, found in Neisseria gonorrhoeae (strain ATCC 700825 / FA 1090).